A 290-amino-acid chain; its full sequence is 3-keto-disaccharide hydrolase (290 aa).

The first 19 residues, 1–19 (MKKVFYPLACCLAAGVLVS), serve as a signal peptide directing secretion. Residue C20 is the site of N-palmitoyl cysteine attachment. The S-diacylglycerol cysteine moiety is linked to residue C20.

The protein localises to the cell membrane. The enzyme catalyses 3-dehydro-alpha,alpha-trehalose + H2O = 3-dehydro-D-glucose + D-glucose. Functionally, 3-keto-disaccharide hydrolase that preferentially hydrolyzes 3-keto-trehalose (3-dehydro-alpha,alpha-trehalose). Important for disaccharide utilization in the human gut. Also shows hydrolysis activity with the glucosinolates glucoraphanin or glucobrassicin, but with much lower efficiency. The sequence is that of 3-keto-disaccharide hydrolase from Bacteroides thetaiotaomicron (strain ATCC 29148 / DSM 2079 / JCM 5827 / CCUG 10774 / NCTC 10582 / VPI-5482 / E50).